Consider the following 83-residue polypeptide: Molybdopterin synthase sulfur carrier subunit (83 aa).

Gly-83 bears the 1-thioglycine; alternate mark. Gly-83 is modified (glycyl adenylate; alternate).

It belongs to the MoaD family. MOCS2A subfamily. In terms of assembly, heterotetramer; composed of 2 small (MOCS2A) and 2 large (MOCS2B) subunits. Post-translationally, C-terminal thiocarboxylation occurs in 2 steps, it is first acyl-adenylated (-COAMP) via the hesA/moeB/thiF part of MOCS3, then thiocarboxylated (-COSH) via the rhodanese domain of MOCS3.

Its subcellular location is the cytoplasm. It participates in cofactor biosynthesis; molybdopterin biosynthesis. Its function is as follows. Acts as a sulfur carrier required for molybdopterin biosynthesis. Component of the molybdopterin synthase complex that catalyzes the conversion of precursor Z into molybdopterin by mediating the incorporation of 2 sulfur atoms into precursor Z to generate a dithiolene group. In the complex, serves as sulfur donor by being thiocarboxylated (-COSH) at its C-terminus by MOCS3. After interaction with MOCS2B, the sulfur is then transferred to precursor Z to form molybdopterin. This is Molybdopterin synthase sulfur carrier subunit from Chlamydomonas reinhardtii (Chlamydomonas smithii).